Here is a 492-residue protein sequence, read N- to C-terminus: Transmembrane protein 39B (492 aa).

A disordered region spans residues 1-54; it reads MGGRRGPNRTSYCRNPLCEPGSSGGSSGSHTSSASVTSVRSRTRSSSGTGLSSP. Asn8 carries an N-linked (GlcNAc...) asparagine glycan. The segment covering 28 to 53 has biased composition (low complexity); that stretch reads GSHTSSASVTSVRSRTRSSSGTGLSS. 8 helical membrane passes run 77 to 97, 115 to 135, 153 to 175, 185 to 205, 288 to 308, 322 to 342, 421 to 441, and 447 to 467; these read SILF…VHYI, TSLN…IVLG, SLFR…GWSL, TYSF…IPFL, EVLV…VWFV, LFLL…LPAS, ILNI…YSLM, and HQTI…FKLL.

This sequence belongs to the TMEM39 family.

The protein resides in the endoplasmic reticulum membrane. Its function is as follows. May protect the cells against DNA damage caused by exposure to the cold-warming stress and facilitates tissue damage repair during the recovery phase. The polypeptide is Transmembrane protein 39B (Homo sapiens (Human)).